A 381-amino-acid polypeptide reads, in one-letter code: Protein COS1 (381 aa).

Residues 1-42 (MKENELKNEKSVDVLSFKQLESQKIVLPQDLFRSSFTWFCYE) lie on the Cytoplasmic side of the membrane. A helical transmembrane segment spans residues 43-63 (IYKSLAFRIWMLLWLPLSVWW). The Extracellular portion of the chain corresponds to 64–72 (KLSNNCIYP). Residues 73–93 (LIVSLLVLFLGPIFVLVICGL) traverse the membrane as a helical segment. The Cytoplasmic segment spans residues 94 to 231 (SRKRSLSKQL…YRFKLTWFLK (138 aa)). A helical membrane pass occupies residues 232-252 (RISNIFMLIPFLNFLCCIYVS). Residues 253–254 (RG) lie on the Extracellular side of the membrane. The chain crosses the membrane as a helical span at residues 255–275 (MCLLLRTFYLGWILFMLVQGF). Topologically, residues 276–381 (QNMRMIVLSV…QLSCSEESLA (106 aa)) are cytoplasmic.

This sequence belongs to the DUP/COS family.

It localises to the membrane. The sequence is that of Protein COS1 (COS1) from Saccharomyces cerevisiae (strain ATCC 204508 / S288c) (Baker's yeast).